Consider the following 354-residue polypeptide: Uroporphyrinogen decarboxylase (354 aa).

Substrate contacts are provided by residues 27–31 (RQAGR), Asp77, Tyr154, Thr209, and His327.

This sequence belongs to the uroporphyrinogen decarboxylase family. As to quaternary structure, homodimer.

The protein localises to the cytoplasm. It carries out the reaction uroporphyrinogen III + 4 H(+) = coproporphyrinogen III + 4 CO2. It participates in porphyrin-containing compound metabolism; protoporphyrin-IX biosynthesis; coproporphyrinogen-III from 5-aminolevulinate: step 4/4. Its function is as follows. Catalyzes the decarboxylation of four acetate groups of uroporphyrinogen-III to yield coproporphyrinogen-III. In Psychromonas ingrahamii (strain DSM 17664 / CCUG 51855 / 37), this protein is Uroporphyrinogen decarboxylase.